Reading from the N-terminus, the 385-residue chain is Trans-enoyl reductase poxH (385 aa).

NADP(+) is bound at residue 64 to 67; sequence QPYS. 156–163 lines the substrate pocket; it reads PDPAAPPI. NADP(+) contacts are provided by residues 199–202, 223–226, tyrosine 241, and 289–290; these read STSV, SGTD, and LG. 309–313 is a substrate binding site; that stretch reads HMAPL. Residue 372–373 participates in NADP(+) binding; sequence KR.

Belongs to the zinc-containing alcohol dehydrogenase family. Monomer.

The protein operates within secondary metabolite biosynthesis. Functionally, trans-enoyl reductase; part of the gene cluster that mediates the biosynthesis of oxaleimides, cytotoxic compounds containing an unusual disubstituted succinimide moiety. The first step of the pathway is provided by the HR-PKS poxF that serves in a new mode of collaborative biosynthesis with the PKS-NRPS poxE, by providing the olefin containing amino acid substrate via the synthesis of an ACP-bound dec-4-enoate. The cytochrome P450 monooxygenase poxM-catalyzed oxidation at the alpha-position creates the enzyme-bound 2-hydroxydec-4-enoyl-ACP thioester, which may be prone to spontaneous hydrolysis to yield 2-hydroxydec-4-enoic acid due to increased electrophilicity of the carbonyl. 2-hydroxydec-4-enoic acid can then be further oxidized by poxM to yield the alpha-ketoacid 2-oxodec-4-enoicacid, which is reductively aminated by the aminotransferase poxL to yield (S,E)-2-aminodec-4-enoic acid. The Hybrid PKS-NRPS synthetase poxE then performs condensation between the octaketide product of its PKS modules and the amino group of (S,E)-2-aminodec-4-enoic acid which is activated and incorporated by the adenylation domain. The resulting aminoacyl product can be cyclized by the Diels-Alderase PoxQ and reductively released by the reductive (R) domain of poxE to yield an aldehyde intermediate. The released aldehyde is then substrate for a Knoevenagel condensation by the hydrolyase poxO followed by an oxidation at the 5-position of the pyrrolidone ring. The presence of the olefin from the amino acid building block allows for migration of the substituted allyl group to occur. This allylic transposition reaction takes place in a conjugate addition, semipinacol-like fashion to yield a succinimide intermediate. Iterative two-electron oxidations of the C7 methyl of the succinimide intermediate to the carboxylic acid can be catalyzed by one of two remaining cytochrome P450 monooxygenasess poxC or poxD to yield oxaleimide A. Subsequent oxidation yields the maleimide scaffold oxaleimide I. Both oxaleimide A and oxaleimide I can undergo oxidative modifications in the decalin ring to yield the series of products oxaleimides B to H. In Penicillium oxalicum, this protein is Trans-enoyl reductase poxH.